The sequence spans 179 residues: Large ribosomal subunit protein uL5 (179 aa).

It belongs to the universal ribosomal protein uL5 family. Part of the 50S ribosomal subunit; part of the 5S rRNA/L5/L18/L25 subcomplex. Contacts the 5S rRNA and the P site tRNA. Forms a bridge to the 30S subunit in the 70S ribosome.

In terms of biological role, this is one of the proteins that bind and probably mediate the attachment of the 5S RNA into the large ribosomal subunit, where it forms part of the central protuberance. In the 70S ribosome it contacts protein S13 of the 30S subunit (bridge B1b), connecting the 2 subunits; this bridge is implicated in subunit movement. Contacts the P site tRNA; the 5S rRNA and some of its associated proteins might help stabilize positioning of ribosome-bound tRNAs. The protein is Large ribosomal subunit protein uL5 of Serratia proteamaculans (strain 568).